The primary structure comprises 436 residues: UPF0597 protein DP0591 (436 aa).

It belongs to the UPF0597 family.

This chain is UPF0597 protein DP0591, found in Desulfotalea psychrophila (strain LSv54 / DSM 12343).